A 271-amino-acid polypeptide reads, in one-letter code: Formamidopyrimidine-DNA glycosylase (271 aa).

Residue Pro2 is the Schiff-base intermediate with DNA of the active site. The Proton donor role is filled by Glu3. Lys58 serves as the catalytic Proton donor; for beta-elimination activity. DNA-binding residues include His90, Arg108, and Arg151. An FPG-type; degenerate zinc finger spans residues 236–271 (QVYGRDGQPCHRDDGGTIRRFAQGGRSTWYCPRCQR). Residue Arg261 is the Proton donor; for delta-elimination activity of the active site.

Belongs to the FPG family. Monomer. Zn(2+) serves as cofactor.

The catalysed reaction is Hydrolysis of DNA containing ring-opened 7-methylguanine residues, releasing 2,6-diamino-4-hydroxy-5-(N-methyl)formamidopyrimidine.. It catalyses the reaction 2'-deoxyribonucleotide-(2'-deoxyribose 5'-phosphate)-2'-deoxyribonucleotide-DNA = a 3'-end 2'-deoxyribonucleotide-(2,3-dehydro-2,3-deoxyribose 5'-phosphate)-DNA + a 5'-end 5'-phospho-2'-deoxyribonucleoside-DNA + H(+). Its function is as follows. Involved in base excision repair of DNA damaged by oxidation or by mutagenic agents. Acts as a DNA glycosylase that recognizes and removes damaged bases. Has a preference for oxidized purines, such as 7,8-dihydro-8-oxoguanine (8-oxoG). Has AP (apurinic/apyrimidinic) lyase activity and introduces nicks in the DNA strand. Cleaves the DNA backbone by beta-delta elimination to generate a single-strand break at the site of the removed base with both 3'- and 5'-phosphates. The polypeptide is Formamidopyrimidine-DNA glycosylase (Erythrobacter litoralis (strain HTCC2594)).